Here is a 39-residue protein sequence, read N- to C-terminus: Photosystem II reaction center protein I (39 aa).

The helical transmembrane segment at 6 to 26 (ISVYSVVFFFIGIFMFGFLAS) threads the bilayer.

Belongs to the PsbI family. As to quaternary structure, PSII is composed of 1 copy each of membrane proteins PsbA, PsbB, PsbC, PsbD, PsbE, PsbF, PsbH, PsbI, PsbJ, PsbK, PsbL, PsbM, PsbT, PsbX, PsbY, PsbZ, Psb30/Ycf12, peripheral proteins PsbO, CyanoQ (PsbQ), PsbU, PsbV and a large number of cofactors. It forms dimeric complexes.

The protein resides in the cellular thylakoid membrane. In terms of biological role, one of the components of the core complex of photosystem II (PSII), required for its stability and/or assembly. PSII is a light-driven water:plastoquinone oxidoreductase that uses light energy to abstract electrons from H(2)O, generating O(2) and a proton gradient subsequently used for ATP formation. It consists of a core antenna complex that captures photons, and an electron transfer chain that converts photonic excitation into a charge separation. The protein is Photosystem II reaction center protein I of Synechococcus sp. (strain RCC307).